A 263-amino-acid chain; its full sequence is 3-deoxy-manno-octulosonate cytidylyltransferase 1 (263 aa).

Belongs to the KdsB family.

Its subcellular location is the cytoplasm. The enzyme catalyses 3-deoxy-alpha-D-manno-oct-2-ulosonate + CTP = CMP-3-deoxy-beta-D-manno-octulosonate + diphosphate. It functions in the pathway nucleotide-sugar biosynthesis; CMP-3-deoxy-D-manno-octulosonate biosynthesis; CMP-3-deoxy-D-manno-octulosonate from 3-deoxy-D-manno-octulosonate and CTP: step 1/1. It participates in bacterial outer membrane biogenesis; lipopolysaccharide biosynthesis. Functionally, activates KDO (a required 8-carbon sugar) for incorporation into bacterial lipopolysaccharide in Gram-negative bacteria. This Burkholderia ambifaria (strain MC40-6) protein is 3-deoxy-manno-octulosonate cytidylyltransferase 1.